The sequence spans 297 residues: Probable esterase afoC (297 aa).

Ser-136 serves as the catalytic Charge relay system. Low complexity predominate over residues 204-217 (ASSSASASVSGSES). The interval 204 to 226 (ASSSASASVSGSESAGEEEEDGH) is disordered. Active-site charge relay system residues include Asp-240 and His-267.

The protein belongs to the LovG family.

Probable esterase; part of the gene cluster that mediates the biosynthesis of asperfuranone, a probable antitumor agent. The polyketide synthase afoG is responsible for producing the 3,5-dimethyloctadienone moiety from acetyl-CoA, three malonyl-CoA, and two S-adenosyl methionines (SAM). The 3,5-dimethyloctadienone moiety is then loaded onto the SAT domain of afoE and extended with four malonyl-CoA and one SAM, which leads to the formation of 2,4-dihydroxy-6-(5,7-dimethyl-2-oxo-trans-3-trans-5-nonadienyl)-3-methylbenzaldehyde (compound 2) after reductive release and aldol condensation. AfoD is the next enzyme in the biosynthesis sequence and hydroxylates the side chain at the benzylic position of compound 2. After benzylic hydroxylation, a furan ring is formed after five-member ring hemiacetal formation and water elimination. AfoF and afoC are proposed to oxidize the R-diketone proton and to reduce the unconjugated carbonyl group, respectively, to generate asperfuranone. Since no intermediates could be isolated from afoF and afoC deletants, the sequence of these two enzymes is not fully understood. Moreover, since afoC deletant still produces a small amount of asperfuranone, other endogenous oxidoreductases might catalyze the same reaction with much less efficiency. This Emericella nidulans (strain FGSC A4 / ATCC 38163 / CBS 112.46 / NRRL 194 / M139) (Aspergillus nidulans) protein is Probable esterase afoC.